The primary structure comprises 22 residues: Large ribosomal subunit protein bL32 (22 aa).

The tract at residues 1–22 is disordered; it reads CVPKRKVSPSXRNMRXAHDXLT.

Belongs to the bacterial ribosomal protein bL32 family.

The polypeptide is Large ribosomal subunit protein bL32 (rpmF) (Brevundimonas vesicularis (Pseudomonas vesicularis)).